Consider the following 251-residue polypeptide: Probable transcriptional regulatory protein AAur_2300 (251 aa).

Belongs to the TACO1 family.

The protein localises to the cytoplasm. This is Probable transcriptional regulatory protein AAur_2300 from Paenarthrobacter aurescens (strain TC1).